A 396-amino-acid chain; its full sequence is Elongation factor Tu (396 aa).

The region spanning 10–206 is the tr-type G domain; it reads KPHVNVGTIG…ALDTYIPTPE (197 aa). The G1 stretch occupies residues 19 to 26; sequence GHVDHGKT. 19-26 contributes to the GTP binding site; it reads GHVDHGKT. Thr-26 provides a ligand contact to Mg(2+). Residues 60 to 64 form a G2 region; it reads GITIN. Positions 81-84 are G3; sequence DCPG. GTP-binding positions include 81–85 and 136–139; these read DCPGH and NKCD. A G4 region spans residues 136–139; that stretch reads NKCD. A G5 region spans residues 174-176; it reads SAK.

It belongs to the TRAFAC class translation factor GTPase superfamily. Classic translation factor GTPase family. EF-Tu/EF-1A subfamily. In terms of assembly, monomer.

It is found in the cytoplasm. The enzyme catalyses GTP + H2O = GDP + phosphate + H(+). Its function is as follows. GTP hydrolase that promotes the GTP-dependent binding of aminoacyl-tRNA to the A-site of ribosomes during protein biosynthesis. The sequence is that of Elongation factor Tu from Cupriavidus pinatubonensis (strain JMP 134 / LMG 1197) (Cupriavidus necator (strain JMP 134)).